We begin with the raw amino-acid sequence, 1029 residues long: FYVE, RhoGEF and PH domain-containing protein tag-77 (1029 aa).

2 stretches are compositionally biased toward basic and acidic residues: residues 1 to 12 (MKYDMNHRKNSD) and 20 to 39 (TVKEMMAEFQNKLDDGDNRF). Disordered stretches follow at residues 1–155 (MKYD…ATSE), 185–254 (VPRM…ERKT), and 279–370 (NNGV…EKDD). Positions 42–56 (QPPPPPSPRRAPPPP) are enriched in pro residues. Low complexity-rich tracts occupy residues 76–85 (PPSSSESSEN) and 122–133 (SSSTSDVSSQNS). 2 stretches are compositionally biased toward polar residues: residues 141–155 (SCTTPTILVSPATSE) and 200–211 (PISQVSTLSQVS). Positions 212–227 (DEFDEGDTSASDEESM) are enriched in acidic residues. Low complexity predominate over residues 316 to 334 (SPTSGMSSSSTDDFSRITS). The span at 335-347 (MTSDRSSILTSHS) shows a compositional bias: polar residues. Residues 375–572 (KLHYAAVEFL…ENVTQAVNQK (198 aa)) form the DH domain. A PH domain is found at 593 to 696 (NVLEPGRVLI…WTDDLTKAQY (104 aa)). Zn(2+)-binding residues include cysteine 810, cysteine 823, cysteine 826, cysteine 831, cysteine 834, cysteine 851, and cysteine 854. An FYVE-type; degenerate zinc finger spans residues 810 to 859 (CSTEFNIINRRHHCRDCGWLICKFCKGQAPLSKYDFTKQNVCSECFDRHY).

The protein localises to the cytoplasm. Its subcellular location is the cytoskeleton. Its function is as follows. Activates cdc-42, a member of the Ras-like family of Rho- and Rac proteins, by exchanging bound GDP for free GTP. May play a role in regulating the actin cytoskeleton and cell shape. Required for normal lifespan. This chain is FYVE, RhoGEF and PH domain-containing protein tag-77, found in Caenorhabditis elegans.